We begin with the raw amino-acid sequence, 87 residues long: Kappa-2-bungarotoxin (87 aa).

A signal peptide spans 1-21; that stretch reads MKTLLLTLVVVTIVCLDLGYT. 5 cysteine pairs are disulfide-bonded: Cys24–Cys42, Cys35–Cys63, Cys48–Cys52, Cys67–Cys79, and Cys80–Cys85.

Belongs to the three-finger toxin family. Long-chain subfamily. Kappa-neurotoxin sub-subfamily. As to quaternary structure, homodimer and heterodimer with kappa 3-bungarotoxin; non-covalently linked. In terms of tissue distribution, expressed by the venom gland.

The protein localises to the secreted. Functionally, postsynaptic neurotoxin that binds and inhibits neuronal nicotinic acetylcholine receptors (nAChR) with high affinity (IC(50)&lt;100 nM). Is a selective, and slowly reversible antagonist of alpha-3/CHRNA3-containing and some alpha-4/CHRNA4-containing AChRs. This Bungarus multicinctus (Many-banded krait) protein is Kappa-2-bungarotoxin.